The chain runs to 576 residues: Arginine--tRNA ligase (576 aa).

The short motif at 126 to 136 (ANPTGPMHIGH) is the 'HIGH' region element.

Belongs to the class-I aminoacyl-tRNA synthetase family. As to quaternary structure, monomer.

The protein resides in the cytoplasm. The enzyme catalyses tRNA(Arg) + L-arginine + ATP = L-arginyl-tRNA(Arg) + AMP + diphosphate. This chain is Arginine--tRNA ligase, found in Rickettsia rickettsii (strain Iowa).